Reading from the N-terminus, the 157-residue chain is Protein Smg homolog (157 aa).

It belongs to the Smg family.

The chain is Protein Smg homolog from Shewanella halifaxensis (strain HAW-EB4).